Here is a 161-residue protein sequence, read N- to C-terminus: Regulator of ribonuclease activity A (161 aa).

It belongs to the RraA family. As to quaternary structure, homotrimer. Binds to both RNA-binding sites in the C-terminal region of Rne and to RhlB.

The protein localises to the cytoplasm. Its function is as follows. Globally modulates RNA abundance by binding to RNase E (Rne) and regulating its endonucleolytic activity. Can modulate Rne action in a substrate-dependent manner by altering the composition of the degradosome. Modulates RNA-binding and helicase activities of the degradosome. The protein is Regulator of ribonuclease activity A of Erwinia tasmaniensis (strain DSM 17950 / CFBP 7177 / CIP 109463 / NCPPB 4357 / Et1/99).